We begin with the raw amino-acid sequence, 607 residues long: uncharacterized protein (607 aa).

Disordered stretches follow at residues G28–R114 and D142–S188. A compositionally biased stretch (polar residues) spans S35–A50. 2 stretches are compositionally biased toward basic and acidic residues: residues V90–T102 and K161–S174. Residues S177–S188 show a composition bias toward low complexity. 2 consecutive PHD-type zinc fingers follow at residues N263–H312 and P406–H459.

This is an uncharacterized protein from Schizosaccharomyces pombe (strain 972 / ATCC 24843) (Fission yeast).